The chain runs to 704 residues: Ion-translocating oxidoreductase complex subunit C (704 aa).

2 consecutive 4Fe-4S ferredoxin-type domains span residues 368-397 (MGAP…QQLY) and 407-436 (KATA…VQYF). Positions 377, 380, 383, 387, 416, 419, 422, and 426 each coordinate [4Fe-4S] cluster. The interval 536–685 (RAKQAAHPMA…ADPRKAAVAA (150 aa)) is disordered. Residues 556 to 565 (KAAVEAAIAR) show a composition bias toward low complexity.

This sequence belongs to the 4Fe4S bacterial-type ferredoxin family. RnfC subfamily. As to quaternary structure, the complex is composed of six subunits: RsxA, RsxB, RsxC, RsxD, RsxE and RsxG. It depends on [4Fe-4S] cluster as a cofactor.

It is found in the cell inner membrane. Part of a membrane-bound complex that couples electron transfer with translocation of ions across the membrane. Required to maintain the reduced state of SoxR. This Salmonella dublin (strain CT_02021853) protein is Ion-translocating oxidoreductase complex subunit C.